The sequence spans 62 residues: Metallothionein-4 (62 aa).

The a divalent metal cation site is built by C6, C8, C14, C16, C20, C22, C25, C27, C30, C34, C35, C37, C38, C42, C45, C49, C51, C58, C60, and C61.

Belongs to the metallothionein superfamily. Type 1 family.

Its function is as follows. Seems to bind zinc and copper. Could play a special role in regulating zinc metabolism during the differentiation of stratified epithelia. In Canis lupus familiaris (Dog), this protein is Metallothionein-4 (MT4).